A 489-amino-acid polypeptide reads, in one-letter code: MNVQNEKSMTVRGKDRYKSGVMSYKKMGYWEPDYTPKDTDVICLFRVTPQDGVDPIEASAAVAGESSTATWTVVWTDRLTAAEKYRAKCYRVDPVPGAEGQYFAYIAYDLDLFEPGSISNLTASVIGNVFGFKPLKALRLEDMRLPVAYVKTFKGPPTGIVVERERLDKFGRPLLGATVKPKLGLSGRNYGRVVYEALKGGLDFTKDDENINSQPFMHWRERFLYCMEAVNRAQAATGEIKGSYLNVTAATMEDMYERAEFAKELGSVVVMIDLVIGYTAIQSMSNWARKNDMILHLHRAGHSTYTRQRSHGVSFRVISKWMRLAGVDHIHAGTVVGKLEGDPLTTRGFYDICREEYNPTQLEHGIFFDQNWASLNKVMPVASGGIHAGQMHQLIQHLGEDVVLQFGGGTIGHPMGIQAGATANRVALEAMILARNEGRDYVSEGPEILAKAAASCTPLKQALEVWKDVTFDYASTDAPDYVPTAVPAA.

The substrate site is built by asparagine 128 and threonine 178. The Proton acceptor role is filled by lysine 180. Lysine 182 serves as a coordination point for substrate. 3 residues coordinate Mg(2+): lysine 206, aspartate 208, and glutamate 209. Lysine 206 carries the post-translational modification N6-carboxylysine. Histidine 298 serves as the catalytic Proton acceptor. Substrate-binding residues include arginine 299, histidine 331, and serine 383.

It belongs to the RuBisCO large chain family. Type I subfamily. As to quaternary structure, heterohexadecamer of 8 large chains and 8 small chains. Requires Mg(2+) as cofactor.

The catalysed reaction is 2 (2R)-3-phosphoglycerate + 2 H(+) = D-ribulose 1,5-bisphosphate + CO2 + H2O. It carries out the reaction D-ribulose 1,5-bisphosphate + O2 = 2-phosphoglycolate + (2R)-3-phosphoglycerate + 2 H(+). In terms of biological role, ruBisCO catalyzes two reactions: the carboxylation of D-ribulose 1,5-bisphosphate, the primary event in carbon dioxide fixation, as well as the oxidative fragmentation of the pentose substrate. Both reactions occur simultaneously and in competition at the same active site. The polypeptide is Ribulose bisphosphate carboxylase large chain 2 (Nitrobacter winogradskyi (strain ATCC 25391 / DSM 10237 / CIP 104748 / NCIMB 11846 / Nb-255)).